Here is a 171-residue protein sequence, read N- to C-terminus: UPF0312 protein SAB2563 (171 aa).

The protein belongs to the UPF0312 family.

The protein is UPF0312 protein SAB2563 of Staphylococcus aureus (strain bovine RF122 / ET3-1).